A 94-amino-acid chain; its full sequence is Co-chaperonin GroES (94 aa).

This sequence belongs to the GroES chaperonin family. In terms of assembly, heptamer of 7 subunits arranged in a ring. Interacts with the chaperonin GroEL.

The protein resides in the cytoplasm. Together with the chaperonin GroEL, plays an essential role in assisting protein folding. The GroEL-GroES system forms a nano-cage that allows encapsulation of the non-native substrate proteins and provides a physical environment optimized to promote and accelerate protein folding. GroES binds to the apical surface of the GroEL ring, thereby capping the opening of the GroEL channel. This is Co-chaperonin GroES from Thermoanaerobacter pseudethanolicus (strain ATCC 33223 / 39E) (Clostridium thermohydrosulfuricum).